The primary structure comprises 411 residues: G1/S-specific cyclin pas1 (411 aa).

Disordered stretches follow at residues 210–253 (LKNQ…PSVL) and 307–326 (SLSKPVSLPPTPSSPKVGVY). Residues 218–252 (PSSSPQTTQDSSPILTMAPSTPVSVGSTPPSTPSV) are compositionally biased toward low complexity.

Belongs to the cyclin family.

Essential for the control of the cell cycle at the G1/S (start) transition. Interacts with the pef1 protein kinase. The pef1/pas1 complex activates the res2/cdc10 complex. The protein is G1/S-specific cyclin pas1 (pas1) of Schizosaccharomyces pombe (strain 972 / ATCC 24843) (Fission yeast).